The primary structure comprises 407 residues: 3-oxoacyl-[acyl-carrier-protein] synthase 1 (407 aa).

The Ketosynthase family 3 (KS3) domain maps to 1–406 (MKRVVITGFG…GTNVSLILKK (406 aa)). Catalysis depends on for beta-ketoacyl synthase activity residues Cys164, His300, and His336.

This sequence belongs to the thiolase-like superfamily. Beta-ketoacyl-ACP synthases family. In terms of assembly, homodimer.

It localises to the cytoplasm. It carries out the reaction a fatty acyl-[ACP] + malonyl-[ACP] + H(+) = a 3-oxoacyl-[ACP] + holo-[ACP] + CO2. The catalysed reaction is (3Z)-decenoyl-[ACP] + malonyl-[ACP] + H(+) = 3-oxo-(5Z)-dodecenoyl-[ACP] + holo-[ACP] + CO2. The protein operates within lipid metabolism; fatty acid biosynthesis. In terms of biological role, involved in the type II fatty acid elongation cycle. Catalyzes the elongation of a wide range of acyl-ACP by the addition of two carbons from malonyl-ACP to an acyl acceptor. Can also use unsaturated fatty acids. Catalyzes a key reaction in unsaturated fatty acid (UFA) synthesis, the elongation of the cis-3-decenoyl-ACP produced by FabA. In Buchnera aphidicola subsp. Schizaphis graminum (strain Sg), this protein is 3-oxoacyl-[acyl-carrier-protein] synthase 1 (fabB).